The following is a 148-amino-acid chain: Large ribosomal subunit protein bL9 (148 aa).

This sequence belongs to the bacterial ribosomal protein bL9 family.

In terms of biological role, binds to the 23S rRNA. The sequence is that of Large ribosomal subunit protein bL9 from Staphylococcus epidermidis (strain ATCC 35984 / DSM 28319 / BCRC 17069 / CCUG 31568 / BM 3577 / RP62A).